A 599-amino-acid polypeptide reads, in one-letter code: Beta-(1--&gt;2)glucan export ATP-binding/permease protein NdvA (599 aa).

The 281-residue stretch at 21-301 folds into the ABC transmembrane type-1 domain; the sequence is TITMCVASVL…ISAFINQTVT (281 aa). The next 5 membrane-spanning stretches (helical) occupy residues 22 to 42, 55 to 75, 156 to 176, 248 to 268, and 276 to 296; these read ITMC…PVLF, IFSP…AAVF, MRMS…GQLV, MAST…VTKG, and IAFI…SAFI. The ABC transporter domain maps to 335-569; the sequence is IVFDNVTYEF…GGRFSDLLRA (235 aa). Residue 368–375 participates in ATP binding; that stretch reads GPTGAGKT.

The protein belongs to the ABC transporter superfamily. Beta-(1--&gt;2)glucan exporter (TC 3.A.1.108.1) family. As to quaternary structure, homodimer.

It localises to the cell inner membrane. It catalyses the reaction [(1-&gt;2)-beta-D-glucosyl](n)(in) + ATP + H2O = [(1-&gt;2)-beta-D-glucosyl](n)(out) + ADP + phosphate + H(+). Its function is as follows. Involved in beta-(1--&gt;2)glucan export. Transmembrane domains (TMD) form a pore in the inner membrane and the ATP-binding domain (NBD) is responsible for energy generation. This is Beta-(1--&gt;2)glucan export ATP-binding/permease protein NdvA from Brucella melitensis biotype 1 (strain ATCC 23456 / CCUG 17765 / NCTC 10094 / 16M).